The primary structure comprises 138 residues: Large ribosomal subunit protein mL43 (138 aa).

Belongs to the mitochondrion-specific ribosomal protein mL43 family. As to quaternary structure, component of the mitochondrial large ribosomal subunit (mt-LSU). Mature N.crassa 74S mitochondrial ribosomes consist of a small (37S) and a large (54S) subunit. The 37S small subunit contains a 16S ribosomal RNA (16S mt-rRNA) and 32 different proteins. The 54S large subunit contains a 23S rRNA (23S mt-rRNA) and 42 different proteins.

Its subcellular location is the mitochondrion. Its function is as follows. Component of the mitochondrial ribosome (mitoribosome), a dedicated translation machinery responsible for the synthesis of mitochondrial genome-encoded proteins, including at least some of the essential transmembrane subunits of the mitochondrial respiratory chain. The mitoribosomes are attached to the mitochondrial inner membrane and translation products are cotranslationally integrated into the membrane. This Neurospora crassa (strain ATCC 24698 / 74-OR23-1A / CBS 708.71 / DSM 1257 / FGSC 987) protein is Large ribosomal subunit protein mL43 (mrpl51).